We begin with the raw amino-acid sequence, 853 residues long: DNA mismatch repair protein MutS (853 aa).

An ATP-binding site is contributed by 614–621 (GPNMGGKS).

This sequence belongs to the DNA mismatch repair MutS family.

This protein is involved in the repair of mismatches in DNA. It is possible that it carries out the mismatch recognition step. This protein has a weak ATPase activity. The protein is DNA mismatch repair protein MutS of Shigella flexneri serotype 5b (strain 8401).